The chain runs to 189 residues: Ribosome hibernation promotion factor (189 aa).

It belongs to the HPF/YfiA ribosome-associated protein family. Long HPF subfamily. In terms of assembly, interacts with 100S ribosomes.

The protein localises to the cytoplasm. In terms of biological role, required for dimerization of active 70S ribosomes into 100S ribosomes in stationary phase; 100S ribosomes are translationally inactive and sometimes present during exponential growth. This Staphylococcus epidermidis (strain ATCC 35984 / DSM 28319 / BCRC 17069 / CCUG 31568 / BM 3577 / RP62A) protein is Ribosome hibernation promotion factor.